A 91-amino-acid chain; its full sequence is Small ribosomal subunit protein uS19 (91 aa).

This sequence belongs to the universal ribosomal protein uS19 family.

Functionally, protein S19 forms a complex with S13 that binds strongly to the 16S ribosomal RNA. This chain is Small ribosomal subunit protein uS19, found in Halorhodospira halophila (strain DSM 244 / SL1) (Ectothiorhodospira halophila (strain DSM 244 / SL1)).